A 107-amino-acid polypeptide reads, in one-letter code: Urease subunit beta (107 aa).

This sequence belongs to the urease beta subunit family. As to quaternary structure, heterotrimer of UreA (gamma), UreB (beta) and UreC (alpha) subunits. Three heterotrimers associate to form the active enzyme.

Its subcellular location is the cytoplasm. The catalysed reaction is urea + 2 H2O + H(+) = hydrogencarbonate + 2 NH4(+). It functions in the pathway nitrogen metabolism; urea degradation; CO(2) and NH(3) from urea (urease route): step 1/1. The chain is Urease subunit beta from Bacillus sp. (strain TB-90).